Here is a 194-residue protein sequence, read N- to C-terminus: dITP/XTP pyrophosphatase (194 aa).

Position 8–13 (8–13 (TKNKGK)) interacts with substrate. Mg(2+)-binding residues include Glu-41 and Asp-70. Asp-70 (proton acceptor) is an active-site residue. Residues Ser-71, 153–156 (FGYD), Lys-176, and 181–182 (HR) contribute to the substrate site.

The protein belongs to the HAM1 NTPase family. In terms of assembly, homodimer. It depends on Mg(2+) as a cofactor.

It catalyses the reaction XTP + H2O = XMP + diphosphate + H(+). The catalysed reaction is dITP + H2O = dIMP + diphosphate + H(+). The enzyme catalyses ITP + H2O = IMP + diphosphate + H(+). Functionally, pyrophosphatase that catalyzes the hydrolysis of nucleoside triphosphates to their monophosphate derivatives, with a high preference for the non-canonical purine nucleotides XTP (xanthosine triphosphate), dITP (deoxyinosine triphosphate) and ITP. Seems to function as a house-cleaning enzyme that removes non-canonical purine nucleotides from the nucleotide pool, thus preventing their incorporation into DNA/RNA and avoiding chromosomal lesions. This Halalkalibacterium halodurans (strain ATCC BAA-125 / DSM 18197 / FERM 7344 / JCM 9153 / C-125) (Bacillus halodurans) protein is dITP/XTP pyrophosphatase.